The primary structure comprises 362 residues: Mannose-1-phosphate guanyltransferase (362 aa).

This sequence belongs to the transferase hexapeptide repeat family.

It is found in the cytoplasm. The catalysed reaction is alpha-D-mannose 1-phosphate + GTP + H(+) = GDP-alpha-D-mannose + diphosphate. Its pathway is nucleotide-sugar biosynthesis; GDP-alpha-D-mannose biosynthesis; GDP-alpha-D-mannose from alpha-D-mannose 1-phosphate (GTP route): step 1/1. Its function is as follows. Involved in cell wall synthesis where it is required for glycosylation. Involved in cell cycle progression through cell-size checkpoint. This is Mannose-1-phosphate guanyltransferase (MPG1) from Candida albicans (strain SC5314 / ATCC MYA-2876) (Yeast).